Reading from the N-terminus, the 92-residue chain is Small ribosomal subunit protein uS19c (92 aa).

It belongs to the universal ribosomal protein uS19 family.

It localises to the plastid. It is found in the chloroplast. In terms of biological role, protein S19 forms a complex with S13 that binds strongly to the 16S ribosomal RNA. This chain is Small ribosomal subunit protein uS19c, found in Spirogyra maxima (Green alga).